The sequence spans 196 residues: RNA-binding protein with multiple splicing 2 (196 aa).

Positions R20–A97 constitute an RRM domain. The tract at residues D30–F40 is important for homodimerization.

As to quaternary structure, homodimer. In terms of tissue distribution, expressed in developing heart, pronephros, retina and epiphysis. In adult, high expression in heart, moderate in kidney, undetectable in liver, lung and skeletal muscle.

The protein resides in the cytoplasm. It localises to the nucleus. Its subcellular location is the stress granule. Its function is as follows. RNA-binding protein involved in the regulation of smooth muscle cell differentiation and proliferation in the gastrointestinal system. Binds NOG mRNA, the major inhibitor of the bone morphogenetic protein (BMP) pathway. Mediates an increase of NOG mRNA levels, thereby contributing to the negative regulation of BMP signaling pathway and promoting reversible dedifferentiation and proliferation of smooth muscle cells. Acts as a pre-mRNA alternative splicing regulator. Mediates ACTN1 and FLNB alternative splicing. Likely binds to mRNA tandem CAC trinucleotide or CA dinucleotide motifs. This Xenopus laevis (African clawed frog) protein is RNA-binding protein with multiple splicing 2.